The sequence spans 510 residues: NAD(P)H-quinone oxidoreductase subunit 2 B, chloroplastic (510 aa).

13 helical membrane passes run 24 to 44 (LLLFDGSLIFPECILIFGLIL), 57 to 77 (IPWLYFISSTSLVMSITSLLF), 99 to 119 (IFQFLILLCSTLCIPLSVEYI), 124 to 144 (MAITEFLLFVLTATIGGMFLC), 149 to 169 (LITIFVAPECFSLCSYLLSGY), 183 to 203 (YLLMGGASSSILVHGFSWLYG), 227 to 247 (PGISIALIFITVGIGFKLSPA), 295 to 315 (WHLLLEILAILSMILGNLIAI), 323 to 343 (MLAYSSIGQIGYVIIGIIVGD), 354 to 374 (YMLFYISMNLGTFACIVLFGL), 395 to 415 (ALSLALCLLSLGGLPPLAGFF), 418 to 438 (LYLFWCGWQAGLYFLVLIGLL), and 484 to 504 (MIVCVIASTIPGISMNPIIAI).

Belongs to the complex I subunit 2 family. In terms of assembly, NDH is composed of at least 16 different subunits, 5 of which are encoded in the nucleus.

The protein resides in the plastid. Its subcellular location is the chloroplast thylakoid membrane. The catalysed reaction is a plastoquinone + NADH + (n+1) H(+)(in) = a plastoquinol + NAD(+) + n H(+)(out). The enzyme catalyses a plastoquinone + NADPH + (n+1) H(+)(in) = a plastoquinol + NADP(+) + n H(+)(out). In terms of biological role, NDH shuttles electrons from NAD(P)H:plastoquinone, via FMN and iron-sulfur (Fe-S) centers, to quinones in the photosynthetic chain and possibly in a chloroplast respiratory chain. The immediate electron acceptor for the enzyme in this species is believed to be plastoquinone. Couples the redox reaction to proton translocation, and thus conserves the redox energy in a proton gradient. This chain is NAD(P)H-quinone oxidoreductase subunit 2 B, chloroplastic, found in Lactuca sativa (Garden lettuce).